The chain runs to 721 residues: Mitogen-activated protein kinase 6 (721 aa).

Methionine 1 is covalently cross-linked (Peptide (Met-Gly) (interchain with G-Cter in ubiquitin)). The Protein kinase domain occupies 20-316; the sequence is YMDLKPLGCG…AEEALSHPYM (297 aa). ATP-binding positions include 26 to 34 and lysine 49; that span reads LGCGGNGLV. Aspartate 152 acts as the Proton acceptor in catalysis. Serine 189 bears the Phosphoserine; by PAK1, PAK2 and PAK3 mark. Residues 189–191 carry the SEG motif motif; it reads SEG. The short motif at 332–337 is the FRIEDE motif element; sequence FHIEDE. Phosphoserine is present on residues serine 386, serine 452, serine 556, serine 558, serine 665, and serine 684. Residues 701–715 are compositionally biased toward polar residues; the sequence is AMKSSPQIPHQTYSS. Positions 701-721 are disordered; sequence AMKSSPQIPHQTYSSILKHLN.

It belongs to the protein kinase superfamily. CMGC Ser/Thr protein kinase family. MAP kinase subfamily. As to quaternary structure, heterodimer with ERK4/MAPK4. Interacts with (via FRIEDE motif) MAPKAPK5. Interacts with UBE3A; this interaction may be indirect and mediated by HERC2, possibly via HERC2 interaction with NEURL4. The cofactor is Mg(2+). In terms of processing, phosphorylated at Ser-189 by PAK1, PAK2 and PAK3 resulting in catalytic activation. Phosphorylated by MAPKAPK5 at other sites. Ubiquitination at Met-1 leads to degradation by the proteasome pathway.

It is found in the cytoplasm. The protein resides in the nucleus. It catalyses the reaction L-seryl-[protein] + ATP = O-phospho-L-seryl-[protein] + ADP + H(+). The catalysed reaction is L-threonyl-[protein] + ATP = O-phospho-L-threonyl-[protein] + ADP + H(+). Activated by phosphorylation at Ser-189. Its function is as follows. Atypical MAPK protein. Phosphorylates microtubule-associated protein 2 (MAP2) and MAPKAPK5. The precise role of the complex formed with MAPKAPK5 is still unclear, but the complex follows a complex set of phosphorylation events: upon interaction with atypical MAPKAPK5, ERK3/MAPK6 is phosphorylated at Ser-189 and then mediates phosphorylation and activation of MAPKAPK5, which in turn phosphorylates ERK3/MAPK6. May promote entry in the cell cycle. This Pongo abelii (Sumatran orangutan) protein is Mitogen-activated protein kinase 6 (MAPK6).